Here is a 519-residue protein sequence, read N- to C-terminus: MHSAILILDFGSQYARLIARRIRETSVYCELHPFDVSPQFIREFSPVGIILSGGPASIFTNDAPRVPQIVFELGVPVLGICYGMQAMAAQLGGEVENAQTREFGYAELLTEPCRLFQDIKDRINSDGKPALDVWMSHGDRVNKLPPGFTAIAFNAATPFAAMADETRRFYGVQFHPEVTHTLQGKAILDRFVHDICDAGYDWNMPDYVEEAIGRIRARVGGDKVILGLSGGVDSSVAAALIHRAIGDQLVCVFVDNGLLRLNEAKQTMETFSRNLAVNVIYVDASRQFLEQLKGITDPEQKRRTIGREFVEIFQQEAAKIENVKWLAQGTIYPDVIESAGSHTKKSGLIKSHHNVGGLPETLRLKLLEPLRELFKDEVRELGLALGLPRDLVFRHPFPGPGLGVRILGEVKYEYTELLRQADAIFIEELRNAGWYEKTSQAFAVFLPIKSVGVMGDNRSYEYVIALRAVQTEDFMTAQWAELPYTLLARISNRIINEIRGINRVVYDISGKPPATIEWE.

One can recognise a Glutamine amidotransferase type-1 domain in the interval 4 to 201; that stretch reads AILILDFGSQ…VHDICDAGYD (198 aa). C81 acts as the Nucleophile in catalysis. Active-site residues include H175 and E177. Residues 202 to 394 form the GMPS ATP-PPase domain; that stretch reads WNMPDYVEEA…LGLPRDLVFR (193 aa). 229–235 is a binding site for ATP; it reads SGGVDSS.

As to quaternary structure, homodimer.

It carries out the reaction XMP + L-glutamine + ATP + H2O = GMP + L-glutamate + AMP + diphosphate + 2 H(+). The protein operates within purine metabolism; GMP biosynthesis; GMP from XMP (L-Gln route): step 1/1. Functionally, catalyzes the synthesis of GMP from XMP. This Nitrosomonas eutropha (strain DSM 101675 / C91 / Nm57) protein is GMP synthase [glutamine-hydrolyzing].